Here is a 152-residue protein sequence, read N- to C-terminus: AGGEAGVTLGQPSLVEQDSHSGFKNELERDGGLLLIAGNESKLKHILILGNKIDLVKESQAKEQYGQILAFVQETVAXGATVGQVLGAVGALPEIFTELXIVNIGSLSTGGQVSAVKADLGKIVLTNPVXTEVGEEKSVEKHWRLIGWGQIR.

At alanine 1 the chain carries N-acetylalanine. Position 51–54 (51–54) interacts with GTP; the sequence is NKID.

This sequence belongs to the TRAFAC class translation factor GTPase superfamily. Classic translation factor GTPase family. EIF2G subfamily. Eukaryotic translation initiation factor 2 eIF2 is a heterotrimeric complex composed of an alpha (EIF2S1), a beta (EIF2S2) and a gamma (EIF2S3) chain. eIF2 is member of the 43S pre-initiation complex (43S PIC). Interacts (via C-terminus) with CDC123; the interaction is direct.

It localises to the cytoplasm. It is found in the cytosol. Its function is as follows. Member of the eIF2 complex that functions in the early steps of protein synthesis by forming a ternary complex with GTP and initiator tRNA. This complex binds to a 40S ribosomal subunit, followed by mRNA binding to form the 43S pre-initiation complex (43S PIC). Junction of the 60S ribosomal subunit to form the 80S initiation complex is preceded by hydrolysis of the GTP bound to eIF2 and release of an eIF2-GDP binary complex. In order for eIF2 to recycle and catalyze another round of initiation, the GDP bound to eIF2 must exchange with GTP by way of a reaction catalyzed by eIF-2B. The chain is Eukaryotic translation initiation factor 2 subunit 3 (EIF2S3) from Oryctolagus cuniculus (Rabbit).